The primary structure comprises 285 residues: MKADLLQRFIFDELDIRGELLVLKKTVQDALSRHDYPQAIQSLLGQALSAGLLLSATLKIKGDTTLQATGEGELRLLMAEATHRRTARGIARWEGAPDSTSLKQLLGNRAALAITIAPQNGQRYQGIVPLSSDSLSACLEEYFERSEQLATRIWLYESNGCWGGLLLQQLPAARGGEYSAENWERIVALSATLTADELFSLPAEEVLHRLFHEESVRVLQEEPASFWCSCSEERTLEVVKSLGREEAFSILDESGEIEMNCQFCLQRYSFGRERIEQLFDSPTLH.

2 disulfides stabilise this stretch: cysteine 228/cysteine 230 and cysteine 261/cysteine 264.

The protein belongs to the HSP33 family. Post-translationally, under oxidizing conditions two disulfide bonds are formed involving the reactive cysteines. Under reducing conditions zinc is bound to the reactive cysteines and the protein is inactive.

Its subcellular location is the cytoplasm. In terms of biological role, redox regulated molecular chaperone. Protects both thermally unfolding and oxidatively damaged proteins from irreversible aggregation. Plays an important role in the bacterial defense system toward oxidative stress. This chain is 33 kDa chaperonin, found in Hahella chejuensis (strain KCTC 2396).